A 3333-amino-acid chain; its full sequence is Laminin subunit alpha-3 (3333 aa).

The first 35 residues, 1-35 (MAAAARPRGRALGPVLPPTPLLLLVLRVLPACGAT), serve as a signal peptide directing secretion. Residues 43 to 298 (AGLSLHPTYF…SIKDISIGGQ (256 aa)) form the Laminin N-terminal domain. N-linked (GlcNAc...) asparagine glycosylation is found at Asn142 and Asn242. Residues 298–728 (QCVCNGHAEV…NNYYFPDLHH (431 aa)) form a domain V region. 29 disulfide bridges follow: Cys299/Cys308, Cys301/Cys319, Cys321/Cys330, Cys333/Cys353, Cys356/Cys365, Cys358/Cys390, Cys393/Cys402, Cys405/Cys423, Cys426/Cys436, Cys428/Cys443, Cys445/Cys454, Cys457/Cys467, Cys491/Cys503, Cys493/Cys509, Cys511/Cys520, Cys523/Cys533, Cys536/Cys548, Cys538/Cys555, Cys557/Cys566, Cys569/Cys586, Cys601/Cys610, Cys613/Cys628, Cys631/Cys645, Cys633/Cys652, Cys654/Cys663, Cys666/Cys681, Cys684/Cys696, Cys686/Cys703, and Cys705/Cys714. Laminin EGF-like domains lie at 299–355 (CVCN…ECEA), 356–425 (CNCH…GCIP), 426–469 (CSCD…FCLR), 491–535 (CDCN…ICQA), 536–588 (CWCS…ACDP), 590–630 (GTIN…GCSE), 631–683 (CKCH…GCQG), and 684–728 (CQCD…DLHH). The tract at residues 796–1265 (TEAVSGHITI…VAFYHKGALP (470 aa)) is domain IV 1 (domain IV B). 16 cysteine pairs are disulfide-bonded: Cys1266-Cys1278, Cys1268-Cys1285, Cys1287-Cys1296, Cys1299-Cys1309, Cys1312-Cys1319, Cys1314-Cys1326, Cys1328-Cys1337, Cys1340-Cys1353, Cys1356-Cys1371, Cys1358-Cys1378, Cys1380-Cys1389, Cys1392-Cys1402, Cys1405-Cys1417, Cys1407-Cys1424, Cys1426-Cys1435, and Cys1438-Cys1453. 4 consecutive Laminin EGF-like domains span residues 1266–1311 (CECH…RCKP), 1312–1355 (CSCG…GCEG), 1356–1404 (CNCS…ECVP), and 1405–1455 (CNCN…GCTS). Positions 1266-1465 (CECHPTGATG…CFCFGVNNQC (200 aa)) are domain III B. The Laminin IV type A domain occupies 1476–1653 (VDMLGWHLET…SGRIALAVEI (178 aa)). Residues 1654–1821 (CACPPAYAGD…DSSPAEECDD (168 aa)) are domain III A. 8 disulfides stabilise this stretch: Cys1687–Cys1696, Cys1689–Cys1703, Cys1706–Cys1715, Cys1718–Cys1731, Cys1734–Cys1746, Cys1736–Cys1755, Cys1757–Cys1766, and Cys1769–Cys1784. Laminin EGF-like domains are found at residues 1687-1733 (CNCN…SCRA) and 1734-1786 (CPCP…SCQP). In terms of domain architecture, Laminin EGF-like 15; truncated spans 1787–1821 (CSCNSNGQLGSCHPLTGDCINQEPKDSSPAEECDD). The interval 1822-2389 (CDSCVMTLLN…ARDAASKVAV (568 aa)) is domain II and I. Coiled coils occupy residues 1852–1941 (ASAG…KNVI) and 1987–2169 (KHLR…DELV). Positions 2278–2280 (RGD) match the Cell attachment site motif. Residues 2322 to 2388 (RTQNEDFKKA…QARDAASKVA (67 aa)) are a coiled coil. N-linked (GlcNAc...) asparagine glycosylation is found at Asn2365, Asn2502, and Asn2584. 5 Laminin G-like domains span residues 2390–2591 (PMRF…VEPC), 2598–2760 (SDKN…TKKC), 2767–2927 (VRSA…LGGC), 2986–3150 (ALQF…VSSC), and 3157–3330 (KGIY…LNGC). 5 cysteine pairs are disulfide-bonded: Cys2561-Cys2591, Cys2737-Cys2760, Cys2895-Cys2927, Cys3127-Cys3150, and Cys3302-Cys3330.

In terms of assembly, laminin is a complex glycoprotein, consisting of three different polypeptide chains (alpha, beta, gamma), which are bound to each other by disulfide bonds into a cross-shaped molecule comprising one long and three short arms with globules at each end. Alpha-3 is a subunit of laminin-5 (laminin-332 or epiligrin/kalinin/nicein), laminin-6 (laminin-311 or K-laminin) and laminin-7 (laminin-321 or KS-laminin). In terms of tissue distribution, skin; respiratory, urinary, and digestive epithelia and in other specialized tissues with prominent secretory or protective functions. Epithelial basement membrane, and epithelial cell tongue that migrates into a wound bed. A differential and focal expression of the subunit alpha-3 is observed in the CNS.

It is found in the secreted. The protein resides in the extracellular space. It localises to the extracellular matrix. Its subcellular location is the basement membrane. In terms of biological role, binding to cells via a high affinity receptor, laminin is thought to mediate the attachment, migration and organization of cells into tissues during embryonic development by interacting with other extracellular matrix components. Laminin-5 is thought to be involved in (1) cell adhesion via integrin alpha-3/beta-1 in focal adhesion and integrin alpha-6/beta-4 in hemidesmosomes, (2) signal transduction via tyrosine phosphorylation of pp125-FAK and p80, (3) differentiation of keratinocytes. This Homo sapiens (Human) protein is Laminin subunit alpha-3 (LAMA3).